A 298-amino-acid chain; its full sequence is Elongation factor Ts (298 aa).

Residues 79–82 (TDFV) are involved in Mg(2+) ion dislocation from EF-Tu.

It belongs to the EF-Ts family.

Its subcellular location is the cytoplasm. Its function is as follows. Associates with the EF-Tu.GDP complex and induces the exchange of GDP to GTP. It remains bound to the aminoacyl-tRNA.EF-Tu.GTP complex up to the GTP hydrolysis stage on the ribosome. This chain is Elongation factor Ts (tsf), found in Mycoplasma genitalium (strain ATCC 33530 / DSM 19775 / NCTC 10195 / G37) (Mycoplasmoides genitalium).